The sequence spans 189 residues: Prostaglandin-H2 D-isomerase (189 aa).

The signal sequence occupies residues 1–24 (MATPSSLWLGLALLGTLGVLQTPA). Gln25 carries the pyrrolidone carboxylic acid modification. Residue Asn49 is glycosylated (N-linked (GlcNAc...) asparagine). The Nucleophile role is filled by Cys63. Asn76 carries N-linked (GlcNAc...) asparagine glycosylation. Cys87 and Cys184 are joined by a disulfide.

It belongs to the calycin superfamily. Lipocalin family. Monomer. In terms of tissue distribution, abundant in the brain and CNS, where it is expressed in tissues of the blood-brain barrier and secreted into the cerebro-spinal fluid.

Its subcellular location is the rough endoplasmic reticulum. The protein resides in the nucleus membrane. The protein localises to the golgi apparatus. It is found in the cytoplasm. It localises to the perinuclear region. Its subcellular location is the secreted. It catalyses the reaction prostaglandin H2 = prostaglandin D2. Functionally, catalyzes the conversion of PGH2 to PGD2, a prostaglandin involved in smooth muscle contraction/relaxation and a potent inhibitor of platelet aggregation. Involved in a variety of CNS functions, such as sedation, NREM sleep and PGE2-induced allodynia, and may have an anti-apoptotic role in oligodendrocytes. Binds small non-substrate lipophilic molecules, including biliverdin, bilirubin, retinal, retinoic acid and thyroid hormone, and may act as a scavenger for harmful hydrophobic molecules and as a secretory retinoid and thyroid hormone transporter. Possibly involved in development and maintenance of the blood-brain, blood-retina, blood-aqueous humor and blood-testis barrier. It is likely to play important roles in both maturation and maintenance of the central nervous system and male reproductive system. Involved in PLA2G3-dependent maturation of mast cells. PLA2G3 is secreted by immature mast cells and acts on nearby fibroblasts upstream to PTDGS to synthesize PGD2, which in turn promotes mast cell maturation and degranulation via PTGDR. This is Prostaglandin-H2 D-isomerase (PTGDS) from Sus scrofa (Pig).